Here is a 259-residue protein sequence, read N- to C-terminus: Phosphoribosylaminoimidazole-succinocarboxamide synthase (259 aa).

This sequence belongs to the SAICAR synthetase family.

The enzyme catalyses 5-amino-1-(5-phospho-D-ribosyl)imidazole-4-carboxylate + L-aspartate + ATP = (2S)-2-[5-amino-1-(5-phospho-beta-D-ribosyl)imidazole-4-carboxamido]succinate + ADP + phosphate + 2 H(+). Its pathway is purine metabolism; IMP biosynthesis via de novo pathway; 5-amino-1-(5-phospho-D-ribosyl)imidazole-4-carboxamide from 5-amino-1-(5-phospho-D-ribosyl)imidazole-4-carboxylate: step 1/2. This is Phosphoribosylaminoimidazole-succinocarboxamide synthase from Hyphomonas neptunium (strain ATCC 15444).